The chain runs to 315 residues: Trimethylguanosine synthase (315 aa).

Positions M1–R58 are required for correct nucleolar localization. D126 provides a ligand contact to S-adenosyl-L-methionine. The interval T271–G315 is disordered. The segment covering N273–L284 has biased composition (basic and acidic residues).

This sequence belongs to the methyltransferase superfamily. Trimethylguanosine synthase family. In terms of assembly, monomer. Interacts with the spliceosomal snRNP core component SMB1 and the snoRNP components CBF5 and NOP58.

It localises to the nucleus. Its subcellular location is the nucleolus. The enzyme catalyses a 5'-end (N(7)-methyl 5'-triphosphoguanosine)-ribonucleoside in snRNA + S-adenosyl-L-methionine = a 5'-end (N(2),N(7)-dimethyl 5'-triphosphoguanosine)-ribonucleoside in snRNA + S-adenosyl-L-homocysteine + H(+). It catalyses the reaction a 5'-end (N(7)-methyl 5'-triphosphoguanosine)-ribonucleoside in snoRNA + S-adenosyl-L-methionine = a 5'-end (N(2),N(7)-dimethyl 5'-triphosphoguanosine)-ribonucleoside in snoRNA + S-adenosyl-L-homocysteine + H(+). It carries out the reaction a 5'-end (N(2),N(7)-dimethyl 5'-triphosphoguanosine)-ribonucleoside in snRNA + S-adenosyl-L-methionine = a 5'-end (N(2),N(2),N(7)-trimethyl 5'-triphosphoguanosine)-ribonucleoside in snRNA + S-adenosyl-L-homocysteine + H(+). The catalysed reaction is a 5'-end (N(2),N(7)-dimethyl 5'-triphosphoguanosine)-ribonucleoside in snoRNA + S-adenosyl-L-methionine = a 5'-end (N(2),N(2),N(7)-trimethyl 5'-triphosphoguanosine)-ribonucleoside in snoRNA + S-adenosyl-L-homocysteine + H(+). With respect to regulation, substrate inhibited by S-adenosyl-L-homocysteine. Functionally, catalyzes the two serial methylation steps for the conversion of the 7-monomethylguanosine (m(7)G) caps of snRNAs and snoRNAs to a 2,2,7-trimethylguanosine (m(2,2,7)G) cap structure. The enzyme is specific for guanine, and N7 methylation must precede N2 methylation. Hypermethylates the m3G cap on TLC1 telomerase which affects telomere silencing and telomere length regulation. Required for pre-mRNA splicing, pre-rRNA processing and small ribosomal subunit synthesis. Involved in nucleolar structural organization. This chain is Trimethylguanosine synthase (TGS1), found in Saccharomyces cerevisiae (strain ATCC 204508 / S288c) (Baker's yeast).